Reading from the N-terminus, the 310-residue chain is Protein OS-9 homolog (310 aa).

The signal sequence occupies residues 1–40 (MFSSSMFPHLILPAIGSSKVRTMVLPFAFVGFFIFPICLA). N60, N97, and N104 each carry an N-linked (GlcNAc...) asparagine glycan. The MRH domain occupies 129-255 (NVFLIENRGY…TIHVPGLCSL (127 aa)). Residues W139 and Q151 each contribute to the a mannooligosaccharide derivative site. N-linked (GlcNAc...) asparagine glycosylation occurs at N204. 2 disulfide bridges follow: C208-C241 and C223-C253. A mannooligosaccharide derivative contacts are provided by D209, R215, E237, and Y243. Composition is skewed to basic and acidic residues over residues 282 to 292 (VDHKDSQHVVD) and 301 to 310 (EVKEVETQSS). Residues 282 to 310 (VDHKDSQHVVDEVAQTSPPEVKEVETQSS) are disordered.

This sequence belongs to the OS-9 family. In terms of assembly, interacts with missfolded ER lumenal proteins.

The protein resides in the endoplasmic reticulum membrane. In terms of biological role, lectin involved in the quality control of the secretory pathway. As a member of the endoplasmic reticulum-associated degradation lumenal (ERAD-L) surveillance system, targets misfolded endoplasmic reticulum lumenal glycoproteins for degradation. This is Protein OS-9 homolog (yos9) from Schizosaccharomyces pombe (strain 972 / ATCC 24843) (Fission yeast).